Reading from the N-terminus, the 166-residue chain is Large ribosomal subunit protein uL10 (166 aa).

Belongs to the universal ribosomal protein uL10 family. Part of the ribosomal stalk of the 50S ribosomal subunit. The N-terminus interacts with L11 and the large rRNA to form the base of the stalk. The C-terminus forms an elongated spine to which L12 dimers bind in a sequential fashion forming a multimeric L10(L12)X complex.

Forms part of the ribosomal stalk, playing a central role in the interaction of the ribosome with GTP-bound translation factors. This Pseudomonas syringae pv. syringae (strain B728a) protein is Large ribosomal subunit protein uL10.